The following is a 70-amino-acid chain: Probable U6 snRNA-associated Sm-like protein (70 aa).

The Sm domain occupies 3–70 (DPFCFLKMYL…ILFVGPRLLL (68 aa)).

Belongs to the snRNP Sm proteins family.

It localises to the nucleus. Functionally, binds specifically to the 3'-terminal U-tract of U6 snRNA. This chain is Probable U6 snRNA-associated Sm-like protein, found in Encephalitozoon cuniculi (strain GB-M1) (Microsporidian parasite).